Here is a 549-residue protein sequence, read N- to C-terminus: Mitochondrial hydroperoxide bicyclase CYP50918A1 (549 aa).

Residues Met-1 to Leu-75 form a disordered region. Basic and acidic residues predominate over residues Ser-8–Pro-26. Over residues Ala-27–Pro-41 the composition is skewed to low complexity. Position 491 (Cys-491) interacts with heme. The tract at residues Asp-528–His-549 is disordered.

Belongs to the cytochrome P450 family. Heme is required as a cofactor.

The protein localises to the mitochondrion. It carries out the reaction (13S)-hydroperoxy-(9Z,11E,15Z)-octadecatrienoate = plasmodiophorol A. It catalyses the reaction (13S)-hydroperoxy-(9Z,11E,15Z)-octadecatrienoate = plasmodiophorol B. Its pathway is lipid metabolism; oxylipin biosynthesis. Functionally, cytochrome P450 hydroperoxide bicyclase involved in the metabolism of oxylipins natural products such as egregiachlorides, hybridalactone, ecklonialactones and related bicyclic oxylipins. Isomerizes the hydroperoxides into epoxyalcohols via epoxyallylic radical. Can use alpha-linolenic 13-hydroperoxide ((9Z,11E,13S,15Z)-13-hydroperoxy-9,11,15-octadecatrienoic, 13-HPOT) as preferred substrate to produce the heterobicyclic oxylipins plasmodiophorol A (6-oxabicyclo[3.1.0]hexane) and plasmodiophorol B (2-oxabicyclo[2.2.1]heptane) at the ratio 12:1 and a minor product plasmodiophorol C (cyclopentanediol) formed through the hydrolysis of plasmodiophorols A and B and, to a lower extent, active with linoleic acid 13-hydroperoxide ((9Z,11E,13S)-13-hydroperoxy-9,11-octadecadienoic, 13-HPOD), linoleic acid 9-hydroperoxide ((9S,10E,12Z)-9-hydroperoxy-10,12-octadecadienoic, 9-HPOD) and alpha-linolenic 9-hydroperoxide ((9S,10E,12Z,15Z)-9-hydroperoxy-10,12,15-octadecatrienoic, 9-HPOT). In Plasmodiophora brassicae (Clubroot disease agent), this protein is Mitochondrial hydroperoxide bicyclase CYP50918A1.